A 293-amino-acid polypeptide reads, in one-letter code: Heterogeneous nuclear ribonucleoprotein C-like 1 (293 aa).

The 72-residue stretch at 16-87 (SRVFIGNLNT…QVVDINLAAE (72 aa)) folds into the RRM domain. Disordered regions lie at residues 137–177 (ALAV…KLKG) and 206–293 (KEQS…QDDS). Residues 177–225 (GDDLQAIKQELTQIKQKVDSLLENLEKIEKEQSKQEVEVKNAKSEEEQS) are a coiled coil. Composition is skewed to basic and acidic residues over residues 206–222 (KEQS…KSEE) and 229–240 (MKKDETHVKMES). Acidic residues-rich tracts occupy residues 242 to 267 (GGAE…DDQL) and 275 to 284 (KEAEEGEDDR).

Belongs to the RRM HNRPC family. RALY subfamily.

The protein localises to the nucleus. Its function is as follows. May play a role in nucleosome assembly by neutralizing basic proteins such as A and B core hnRNPs. The protein is Heterogeneous nuclear ribonucleoprotein C-like 1 (HNRNPCL1) of Homo sapiens (Human).